The primary structure comprises 152 residues: Large ribosomal subunit protein uL15 (152 aa).

The tract at residues 1–79 (MRLNELSPPP…GRHTPAHPKV (79 aa)) is disordered. Residues 22–35 (GEGSGYGKTSGRGQ) are compositionally biased toward gly residues.

Belongs to the universal ribosomal protein uL15 family. Part of the 50S ribosomal subunit.

In terms of biological role, binds to the 23S rRNA. In Rubrobacter xylanophilus (strain DSM 9941 / JCM 11954 / NBRC 16129 / PRD-1), this protein is Large ribosomal subunit protein uL15.